A 141-amino-acid polypeptide reads, in one-letter code: Nucleoside diphosphate kinase (141 aa).

Positions 9, 57, 85, 91, 102, and 112 each coordinate ATP. The active-site Pros-phosphohistidine intermediate is His115.

The protein belongs to the NDK family. Homotetramer. The cofactor is Mg(2+).

The protein resides in the cytoplasm. The catalysed reaction is a 2'-deoxyribonucleoside 5'-diphosphate + ATP = a 2'-deoxyribonucleoside 5'-triphosphate + ADP. It catalyses the reaction a ribonucleoside 5'-diphosphate + ATP = a ribonucleoside 5'-triphosphate + ADP. Its function is as follows. Major role in the synthesis of nucleoside triphosphates other than ATP. The ATP gamma phosphate is transferred to the NDP beta phosphate via a ping-pong mechanism, using a phosphorylated active-site intermediate. The chain is Nucleoside diphosphate kinase from Chloroherpeton thalassium (strain ATCC 35110 / GB-78).